We begin with the raw amino-acid sequence, 329 residues long: 4-hydroxythreonine-4-phosphate dehydrogenase (329 aa).

Substrate is bound by residues His-136 and Thr-137. Positions 166, 211, and 266 each coordinate a divalent metal cation. The substrate site is built by Lys-274, Asn-283, and Arg-292.

Belongs to the PdxA family. In terms of assembly, homodimer. The cofactor is Zn(2+). Mg(2+) serves as cofactor. Co(2+) is required as a cofactor.

Its subcellular location is the cytoplasm. The enzyme catalyses 4-(phosphooxy)-L-threonine + NAD(+) = 3-amino-2-oxopropyl phosphate + CO2 + NADH. Its pathway is cofactor biosynthesis; pyridoxine 5'-phosphate biosynthesis; pyridoxine 5'-phosphate from D-erythrose 4-phosphate: step 4/5. In terms of biological role, catalyzes the NAD(P)-dependent oxidation of 4-(phosphooxy)-L-threonine (HTP) into 2-amino-3-oxo-4-(phosphooxy)butyric acid which spontaneously decarboxylates to form 3-amino-2-oxopropyl phosphate (AHAP). The sequence is that of 4-hydroxythreonine-4-phosphate dehydrogenase from Escherichia coli (strain SE11).